Here is a 701-residue protein sequence, read N- to C-terminus: DNA-directed RNA polymerase subunit beta' (701 aa).

The Zn(2+) site is built by Cys76, Cys78, Cys94, and Cys97. Residues Asp511, Asp513, and Asp515 each contribute to the Mg(2+) site.

Belongs to the RNA polymerase beta' chain family. RpoC1 subfamily. In plastids the minimal PEP RNA polymerase catalytic core is composed of four subunits: alpha, beta, beta', and beta''. When a (nuclear-encoded) sigma factor is associated with the core the holoenzyme is formed, which can initiate transcription. The cofactor is Mg(2+). Zn(2+) serves as cofactor.

It localises to the plastid. Its subcellular location is the chloroplast. The catalysed reaction is RNA(n) + a ribonucleoside 5'-triphosphate = RNA(n+1) + diphosphate. In terms of biological role, DNA-dependent RNA polymerase catalyzes the transcription of DNA into RNA using the four ribonucleoside triphosphates as substrates. In Pelargonium hortorum (Common geranium), this protein is DNA-directed RNA polymerase subunit beta'.